Here is a 243-residue protein sequence, read N- to C-terminus: Lipid II isoglutaminyl synthase (glutamine-hydrolyzing) subunit GatD (243 aa).

Residues 6 to 197 (IYHFMSDKLN…LHGPILPKNY (192 aa)) enclose the GATase cobBQ-type domain. Cys-94 (nucleophile) is an active-site residue. Arg-128 is a substrate binding site. The active site involves His-189.

This sequence belongs to the CobB/CobQ family. GatD subfamily. In terms of assembly, forms a heterodimer with MurT.

The enzyme catalyses beta-D-GlcNAc-(1-&gt;4)-Mur2Ac(oyl-L-Ala-gamma-D-Glu-L-Lys-D-Ala-D-Ala)-di-trans,octa-cis-undecaprenyl diphosphate + L-glutamine + ATP + H2O = beta-D-GlcNAc-(1-&gt;4)-Mur2Ac(oyl-L-Ala-D-isoglutaminyl-L-Lys-D-Ala-D-Ala)-di-trans,octa-cis-undecaprenyl diphosphate + L-glutamate + ADP + phosphate + H(+). The catalysed reaction is L-glutamine + H2O = L-glutamate + NH4(+). Its pathway is cell wall biogenesis; peptidoglycan biosynthesis. The lipid II isoglutaminyl synthase complex catalyzes the formation of alpha-D-isoglutamine in the cell wall lipid II stem peptide. The GatD subunit catalyzes the hydrolysis of glutamine to glutamate and ammonia. The resulting ammonia molecule is channeled to the active site of MurT. The sequence is that of Lipid II isoglutaminyl synthase (glutamine-hydrolyzing) subunit GatD from Staphylococcus aureus (strain N315).